The chain runs to 88 residues: MQVTDVRIRKITNEGRMKAIVSVTFDNCFVVHDIKIIEGQNGLFIAMPSRKTPEGEFKDIAHPINQETRDMVQKAVIEKYEAVISAGE.

Belongs to the SpoVG family.

In terms of biological role, could be involved in septation. The chain is Putative septation protein SpoVG from Caldicellulosiruptor bescii (strain ATCC BAA-1888 / DSM 6725 / KCTC 15123 / Z-1320) (Anaerocellum thermophilum).